A 173-amino-acid chain; its full sequence is dCTP deaminase (173 aa).

Residues 97 to 102 (RSSFAR) and D113 each bind dCTP. E123 serves as the catalytic Proton donor/acceptor. Residues Y155 and Q162 each coordinate dCTP.

This sequence belongs to the dCTP deaminase family. As to quaternary structure, homotrimer.

It carries out the reaction dCTP + H2O + H(+) = dUTP + NH4(+). The protein operates within pyrimidine metabolism; dUMP biosynthesis; dUMP from dCTP (dUTP route): step 1/2. In terms of biological role, catalyzes the deamination of dCTP to dUTP. This is dCTP deaminase from Acidianus ambivalens (Desulfurolobus ambivalens).